The chain runs to 462 residues: ATP synthase subunit beta (462 aa).

151–158 serves as a coordination point for ATP; that stretch reads GGAGVGKT.

The protein belongs to the ATPase alpha/beta chains family. In terms of assembly, F-type ATPases have 2 components, CF(1) - the catalytic core - and CF(0) - the membrane proton channel. CF(1) has five subunits: alpha(3), beta(3), gamma(1), delta(1), epsilon(1). CF(0) has four main subunits: a(1), b(1), b'(1) and c(9-12).

The protein resides in the cell inner membrane. The enzyme catalyses ATP + H2O + 4 H(+)(in) = ADP + phosphate + 5 H(+)(out). In terms of biological role, produces ATP from ADP in the presence of a proton gradient across the membrane. The catalytic sites are hosted primarily by the beta subunits. This is ATP synthase subunit beta from Chlorobium phaeobacteroides (strain DSM 266 / SMG 266 / 2430).